The primary structure comprises 487 residues: Betaine aldehyde dehydrogenase (487 aa).

Ile-27 and Asp-93 together coordinate K(+). 149 to 151 (GAW) lines the NAD(+) pocket. Catalysis depends on Lys-161, which acts as the Charge relay system. NAD(+) contacts are provided by residues 175–178 (KPSE) and 228–231 (SVPT). Glu-249 acts as the Proton acceptor in catalysis. NAD(+) is bound by residues Gly-251, Cys-283, and Glu-384. Cys-283 functions as the Nucleophile in the catalytic mechanism. Position 283 is a cysteine sulfenic acid (-SOH) (Cys-283). Lys-454 and Gly-457 together coordinate K(+). The active-site Charge relay system is the Glu-461.

It belongs to the aldehyde dehydrogenase family. In terms of assembly, dimer of dimers. The cofactor is K(+).

It carries out the reaction betaine aldehyde + NAD(+) + H2O = glycine betaine + NADH + 2 H(+). The protein operates within amine and polyamine biosynthesis; betaine biosynthesis via choline pathway; betaine from betaine aldehyde: step 1/1. In terms of biological role, involved in the biosynthesis of the osmoprotectant glycine betaine. Catalyzes the irreversible oxidation of betaine aldehyde to the corresponding acid. This is Betaine aldehyde dehydrogenase from Mesorhizobium japonicum (strain LMG 29417 / CECT 9101 / MAFF 303099) (Mesorhizobium loti (strain MAFF 303099)).